A 433-amino-acid chain; its full sequence is MSYSTRSISQSARFGVLASPGVNRARSVAGGASTVRMSSANVTSSAFGGSSAFAGSSAFAGSPAFNVSVTSNNGKETMQNLNDRLANYLDRVRSLEQANHELELKIREYLDKKAAVGSLDYSGYYNTINLLRSQINDATIDNTRLVLSIDNAKLAADDFKIKYESEMAIRTGAESDIVGLRRVLDELTLNKTDLELEIESLKEELIYLKKNHEEELAVVRSSARGNVDVQVDSAPPVDLAQIMADVRSQYESMMEKNRQELEACYKGQSENLNHEVATNTAALQTSKTAITDLKRTIQSLEIELQSLLSMKGALEGTLAETEAQYGAQLNHLQAMITQVEMELQNLRSDADHQSLEYKRLLDAKTRLEMEIATYRRLLEGEDTRFSQTETQKAVTIVSKEQSSSSIKKVKTVIEEVVDGKVVSSRVEELTETS.

A head region spans residues 1 to 73 (MSYSTRSISQ…AFNVSVTSNN (73 aa)). Residues 74–109 (GKETMQNLNDRLANYLDRVRSLEQANHELELKIREY) form a coil 1A region. The IF rod domain maps to 74–385 (GKETMQNLND…RLLEGEDTRF (312 aa)). A linker 1 region spans residues 110–127 (LDKKAAVGSLDYSGYYNT). The tract at residues 128–219 (INLLRSQIND…KNHEEELAVV (92 aa)) is coil 1B. Positions 220 to 242 (RSSARGNVDVQVDSAPPVDLAQI) are linker 12. The coil 2 stretch occupies residues 243–381 (MADVRSQYES…ATYRRLLEGE (139 aa)). Residues 382–433 (DTRFSQTETQKAVTIVSKEQSSSSIKKVKTVIEEVVDGKVVSSRVEELTETS) form a tail region.

It belongs to the intermediate filament family. In terms of assembly, heterotetramer of two type I and two type II keratins.

This chain is Keratin, type I cytoskeletal 47 kDa (xk70a), found in Xenopus laevis (African clawed frog).